The following is a 349-amino-acid chain: Probable dual-specificity RNA methyltransferase RlmN (349 aa).

Glu-93 serves as the catalytic Proton acceptor. Residues 99 to 329 (YKHGNTICVS…TTIRREMGSD (231 aa)) enclose the Radical SAM core domain. Cys-106 and Cys-334 form a disulfide bridge. [4Fe-4S] cluster-binding residues include Cys-113, Cys-117, and Cys-120. S-adenosyl-L-methionine-binding positions include 160-161 (GE), Ser-192, 215-217 (SLH), and Asn-291. The S-methylcysteine intermediate role is filled by Cys-334.

Belongs to the radical SAM superfamily. RlmN family. The cofactor is [4Fe-4S] cluster.

It is found in the cytoplasm. It carries out the reaction adenosine(2503) in 23S rRNA + 2 reduced [2Fe-2S]-[ferredoxin] + 2 S-adenosyl-L-methionine = 2-methyladenosine(2503) in 23S rRNA + 5'-deoxyadenosine + L-methionine + 2 oxidized [2Fe-2S]-[ferredoxin] + S-adenosyl-L-homocysteine. The enzyme catalyses adenosine(37) in tRNA + 2 reduced [2Fe-2S]-[ferredoxin] + 2 S-adenosyl-L-methionine = 2-methyladenosine(37) in tRNA + 5'-deoxyadenosine + L-methionine + 2 oxidized [2Fe-2S]-[ferredoxin] + S-adenosyl-L-homocysteine. In terms of biological role, specifically methylates position 2 of adenine 2503 in 23S rRNA and position 2 of adenine 37 in tRNAs. This is Probable dual-specificity RNA methyltransferase RlmN from Clostridium tetani (strain Massachusetts / E88).